A 266-amino-acid chain; its full sequence is tRNA dimethylallyltransferase (266 aa).

The protein belongs to the IPP transferase family. Monomer. Requires Mg(2+) as cofactor.

It carries out the reaction adenosine(37) in tRNA + dimethylallyl diphosphate = N(6)-dimethylallyladenosine(37) in tRNA + diphosphate. Catalyzes the transfer of a dimethylallyl group onto the adenine at position 37 in tRNAs that read codons beginning with uridine, leading to the formation of N6-(dimethylallyl)adenosine (i(6)A). The protein is tRNA dimethylallyltransferase (miaA) of Helicobacter acinonychis (strain Sheeba).